Reading from the N-terminus, the 104-residue chain is MEVNGEEERRSRREDEEKEDYYYSLLNSPCSVCNKFVQAILKCLGLESSSIPPSSSSSSPSLVEEEDSGTETVEETGFMARITAVLRRRPRPPPYSSGRPGQNN.

Positions 1 to 81 are excised as a propeptide; that stretch reads MEVNGEEERR…TVEETGFMAR (81 aa). Residues 48–61 are compositionally biased toward low complexity; sequence SSSIPPSSSSSSPS. The disordered stretch occupies residues 48–104; it reads SSSIPPSSSSSSPSLVEEEDSGTETVEETGFMARITAVLRRRPRPPPYSSGRPGQNN. Residues 63-74 are compositionally biased toward acidic residues; sequence VEEEDSGTETVE.

This sequence belongs to the brassicaceae elicitor peptide family.

Elicitor of plant defense. The protein is Elicitor peptide 6 (PEP6) of Arabidopsis thaliana (Mouse-ear cress).